The following is a 206-amino-acid chain: 2,3-bisphosphoglycerate-dependent phosphoglycerate mutase (206 aa).

Substrate contacts are provided by residues 9–16, 22–23, R61, 88–91, K99, 115–116, and 159–160; these read RHGQSEWN, TG, ERDY, RR, and GN. The Tele-phosphohistidine intermediate role is filled by H10. E88 functions as the Proton donor/acceptor in the catalytic mechanism.

The protein belongs to the phosphoglycerate mutase family. BPG-dependent PGAM subfamily. In terms of assembly, homodimer.

The catalysed reaction is (2R)-2-phosphoglycerate = (2R)-3-phosphoglycerate. Its pathway is carbohydrate degradation; glycolysis; pyruvate from D-glyceraldehyde 3-phosphate: step 3/5. In terms of biological role, catalyzes the interconversion of 2-phosphoglycerate and 3-phosphoglycerate. The polypeptide is 2,3-bisphosphoglycerate-dependent phosphoglycerate mutase (Mesorhizobium japonicum (strain LMG 29417 / CECT 9101 / MAFF 303099) (Mesorhizobium loti (strain MAFF 303099))).